The primary structure comprises 562 residues: SPI-1 type 3 secretion system secretin (562 aa).

The first 24 residues, 1–24, serve as a signal peptide directing secretion; that stretch reads MKTHILLARVLACAALVLVTPGYS.

Belongs to the bacterial secretin family. T3SS SctC subfamily. As to quaternary structure, the core secretion machinery of the T3SS is composed of approximately 20 different proteins, including cytoplasmic components, a base, an export apparatus and a needle. This subunit is part of the base, which anchors the injectisome in the bacterial cell envelope. Forms a stable homooligomeric complex. The complex is composed of 15 subunits.

It is found in the cell outer membrane. In terms of biological role, component of the type III secretion system (T3SS), also called injectisome, which is used to inject bacterial effector proteins into eukaryotic host cells. Forms a ring-shaped multimeric structure with an apparent central pore in the outer membrane. The sequence is that of SPI-1 type 3 secretion system secretin from Salmonella typhimurium (strain LT2 / SGSC1412 / ATCC 700720).